Here is a 492-residue protein sequence, read N- to C-terminus: Peptidyl-prolyl cis-trans isomerase-like 4 (492 aa).

The PPIase cyclophilin-type domain maps to 1-161 (MAVLLETTLG…QDIRINHTVI (161 aa)). Residues 167–188 (DDPPDLLIPDRSPEPTREQLDS) are disordered. Residues 177-187 (RSPEPTREQLD) show a composition bias toward basic and acidic residues. A Phosphoserine modification is found at Ser-178. Position 182 is a phosphothreonine (Thr-182). Glycyl lysine isopeptide (Lys-Gly) (interchain with G-Cter in SUMO2) cross-links involve residues Lys-201, Lys-212, and Lys-218. The RRM domain occupies 240 to 318 (NVLFVCKLNP…RRIHVDFSQS (79 aa)). Glycyl lysine isopeptide (Lys-Gly) (interchain with G-Cter in SUMO2) cross-links involve residues Lys-321 and Lys-362. Disordered regions lie at residues 368–406 (DEQA…PIKN) and 423–492 (EESC…SKYR). The segment covering 377–390 (SHSHTSKKHKKKTH) has biased composition (basic residues). Ser-393 carries the phosphoserine modification. A Glycyl lysine isopeptide (Lys-Gly) (interchain with G-Cter in SUMO2) cross-link involves residue Lys-405. A compositionally biased stretch (basic and acidic residues) spans 426-452 (CWEKQKSEKRDRTQNRSRSRSRERDGH). Residue Lys-460 forms a Glycyl lysine isopeptide (Lys-Gly) (interchain with G-Cter in SUMO2) linkage. Residue Ser-471 is modified to Phosphoserine. Positions 482 to 492 (KSKDKEKSKYR) are enriched in basic and acidic residues.

Belongs to the cyclophilin-type PPIase family. PPIL4 subfamily. As to expression, abundantly expressed in kidney but has a ubiquitously low expression pattern in other adult tissues.

The protein resides in the nucleus. The enzyme catalyses [protein]-peptidylproline (omega=180) = [protein]-peptidylproline (omega=0). In terms of biological role, PPIases accelerate the folding of proteins. It catalyzes the cis-trans isomerization of proline imidic peptide bonds in oligopeptides. The sequence is that of Peptidyl-prolyl cis-trans isomerase-like 4 (PPIL4) from Homo sapiens (Human).